Reading from the N-terminus, the 225-residue chain is C-reactive protein (225 aa).

Positions 1 to 18 (MLVVFLCLLSVTLEATEG) are cleaved as a signal peptide. Residues 23–225 (SGKVLQFKTA…TGNVLVATDN (203 aa)) form the Pentraxin (PTX) domain. The cysteines at positions 54 and 116 are disulfide-linked. 5 residues coordinate Ca(2+): aspartate 78, aspartate 157, proline 158, aspartate 159, and glutamine 169.

This sequence belongs to the pentraxin family. As to quaternary structure, homotrimer. The cofactor is Ca(2+).

It localises to the secreted. Its function is as follows. Displays several functions associated with host defense: it promotes agglutination, bacterial capsular swelling, phagocytosis, and complement fixation through its calcium-dependent binding to phosphorylcholine. This chain is C-reactive protein, found in Danio rerio (Zebrafish).